We begin with the raw amino-acid sequence, 474 residues long: ATP synthase subunit beta (474 aa).

151–158 (GGAGVGKT) lines the ATP pocket.

It belongs to the ATPase alpha/beta chains family. In terms of assembly, F-type ATPases have 2 components, CF(1) - the catalytic core - and CF(0) - the membrane proton channel. CF(1) has five subunits: alpha(3), beta(3), gamma(1), delta(1), epsilon(1). CF(0) has three main subunits: a(1), b(2) and c(9-12). The alpha and beta chains form an alternating ring which encloses part of the gamma chain. CF(1) is attached to CF(0) by a central stalk formed by the gamma and epsilon chains, while a peripheral stalk is formed by the delta and b chains.

Its subcellular location is the cell inner membrane. It catalyses the reaction ATP + H2O + 4 H(+)(in) = ADP + phosphate + 5 H(+)(out). Its function is as follows. Produces ATP from ADP in the presence of a proton gradient across the membrane. The catalytic sites are hosted primarily by the beta subunits. The sequence is that of ATP synthase subunit beta from Ruegeria sp. (strain TM1040) (Silicibacter sp.).